The sequence spans 345 residues: Phosphoribosylformylglycinamidine cyclo-ligase (345 aa).

The protein belongs to the AIR synthase family.

Its subcellular location is the cytoplasm. The enzyme catalyses 2-formamido-N(1)-(5-O-phospho-beta-D-ribosyl)acetamidine + ATP = 5-amino-1-(5-phospho-beta-D-ribosyl)imidazole + ADP + phosphate + H(+). The protein operates within purine metabolism; IMP biosynthesis via de novo pathway; 5-amino-1-(5-phospho-D-ribosyl)imidazole from N(2)-formyl-N(1)-(5-phospho-D-ribosyl)glycinamide: step 2/2. The sequence is that of Phosphoribosylformylglycinamidine cyclo-ligase from Salmonella typhi.